The chain runs to 284 residues: Bifunctional protein FolD (284 aa).

NADP(+) is bound by residues 166–168 (GAS) and isoleucine 232.

It belongs to the tetrahydrofolate dehydrogenase/cyclohydrolase family. Homodimer.

The enzyme catalyses (6R)-5,10-methylene-5,6,7,8-tetrahydrofolate + NADP(+) = (6R)-5,10-methenyltetrahydrofolate + NADPH. It carries out the reaction (6R)-5,10-methenyltetrahydrofolate + H2O = (6R)-10-formyltetrahydrofolate + H(+). The protein operates within one-carbon metabolism; tetrahydrofolate interconversion. Functionally, catalyzes the oxidation of 5,10-methylenetetrahydrofolate to 5,10-methenyltetrahydrofolate and then the hydrolysis of 5,10-methenyltetrahydrofolate to 10-formyltetrahydrofolate. The chain is Bifunctional protein FolD from Pseudomonas paraeruginosa (strain DSM 24068 / PA7) (Pseudomonas aeruginosa (strain PA7)).